Here is a 432-residue protein sequence, read N- to C-terminus: Anaerobic glycerol-3-phosphate dehydrogenase subunit B (432 aa).

The protein belongs to the anaerobic G-3-P dehydrogenase subunit B family. In terms of assembly, composed of a catalytic GlpA/B dimer and of membrane bound GlpC. It depends on FMN as a cofactor.

The catalysed reaction is a quinone + sn-glycerol 3-phosphate = dihydroxyacetone phosphate + a quinol. It participates in polyol metabolism; glycerol degradation via glycerol kinase pathway; glycerone phosphate from sn-glycerol 3-phosphate (anaerobic route): step 1/1. In terms of biological role, conversion of glycerol 3-phosphate to dihydroxyacetone. Uses fumarate or nitrate as electron acceptor. The protein is Anaerobic glycerol-3-phosphate dehydrogenase subunit B of Haemophilus influenzae (strain 86-028NP).